Reading from the N-terminus, the 152-residue chain is Histone H2B.1 (152 aa).

The segment covering methionine 1–glutamate 23 has biased composition (basic and acidic residues). The segment at methionine 1–lysine 60 is disordered. Lysine 7 and lysine 35 each carry N6-acetyllysine. Lysine 148 is covalently cross-linked (Glycyl lysine isopeptide (Lys-Gly) (interchain with G-Cter in ubiquitin)).

Belongs to the histone H2B family. As to quaternary structure, the nucleosome is a histone octamer containing two molecules each of H2A, H2B, H3 and H4 assembled in one H3-H4 heterotetramer and two H2A-H2B heterodimers. The octamer wraps approximately 147 bp of DNA. In terms of processing, can be acetylated to form H2BK6ac and H2BK33ac. Post-translationally, monoubiquitinated by BRE1 to form H2BK143ub1 and deubiquitinated by UBP26. Required for heterochromatic histone H3 di- and trimethylation at H3K4me. May give a specific tag for epigenetic transcriptional activation.

The protein localises to the nucleus. The protein resides in the chromosome. Functionally, core component of nucleosome. Nucleosomes wrap and compact DNA into chromatin, limiting DNA accessibility to the cellular machineries which require DNA as a template. Histones thereby play a central role in transcription regulation, DNA repair, DNA replication and chromosomal stability. DNA accessibility is regulated via a complex set of post-translational modifications of histones, also called histone code, and nucleosome remodeling. The sequence is that of Histone H2B.1 from Oryza sativa subsp. indica (Rice).